A 662-amino-acid chain; its full sequence is Sodium/glucose cotransporter 1 (662 aa).

Topologically, residues 1–24 are extracellular; that stretch reads MDSSTWSPATTATTEPLKPHERIR. A helical membrane pass occupies residues 25–47; sequence NAADISVIVIYFVVVMAVGLWAM. Residues 48–66 are Cytoplasmic-facing; that stretch reads CSTNRGTVGGFFLAGRSMV. Residues 67–90 traverse the membrane as a helical segment; sequence WWPVGASLFASNIGSGHFVGLAGT. At 91 to 95 the chain is on the extracellular side; the sequence is GAAAG. Residues 96–117 traverse the membrane as a helical segment; the sequence is IATGGFEWNALIWVVVLGWLFV. Topologically, residues 118–139 are cytoplasmic; the sequence is PIYIKAGVVTMPEYLRKRFGGK. The chain crosses the membrane as a helical span at residues 140 to 169; the sequence is RIQVYLSILSLMLYIFTKISADIFSGAIFI. At 170-176 the chain is on the extracellular side; it reads TLALGLD. Residues 177 to 193 form a helical membrane-spanning segment; it reads LYLAIFLLLAITGLYTI. Residues 194-202 lie on the Cytoplasmic side of the membrane; sequence TGGLAAVIY. Residues 203 to 221 traverse the membrane as a helical segment; sequence TDTLQTAIMLVGSFILTGF. Residues 222-275 lie on the Extracellular side of the membrane; that stretch reads AFHEVGGYDAFMEKYMNAIPTVISDGNITIKKECYTPRADSFHIFRDPLKGDLP. An N-linked (GlcNAc...) asparagine glycan is attached at asparagine 248. 5 disulfides stabilise this stretch: cysteine 255/cysteine 511, cysteine 255/cysteine 608, cysteine 345/cysteine 351, cysteine 355/cysteine 361, and cysteine 517/cysteine 522. The chain crosses the membrane as a helical span at residues 276–295; the sequence is WPGLTFGLSILALWYWCTDQ. The Cytoplasmic segment spans residues 296–309; it reads VIVQRCLSAKNMSH. A helical transmembrane segment spans residues 310–331; it reads VKAGCVMCGYFKLLPMFVIVMP. Over 332 to 375 the chain is Extracellular; the sequence is GMISRVLYTEKIACTVPSECEKYCGTKVGCSNIAYPTLVVELMP. Residues 376 to 406 form a helical membrane-spanning segment; sequence NGLRGLMLSVMLASLMSSLTSIFNSASTLFT. The Cytoplasmic portion of the chain corresponds to 407–422; sequence MDVYTKIRKRASEKEL. Residues 423 to 444 form a helical membrane-spanning segment; the sequence is MIAGRLFILVLIGISIAWVPIV. The Extracellular portion of the chain corresponds to 445 to 451; the sequence is QSAQSGQ. Residues 452 to 477 traverse the membrane as a helical segment; the sequence is LFDYIQSVTSYLGPPIAAVFLLAIFC. Residues 478–481 lie on the Cytoplasmic side of the membrane; that stretch reads KRVN. The helical transmembrane segment at 482-504 threads the bilayer; that stretch reads EEGAFWGLVIGCMIGLARMITEF. Residues 505–525 are Extracellular-facing; that stretch reads AYGTGSCVEPSNCPTIICGVH. A helical transmembrane segment spans residues 526–547; the sequence is YLYFAIILFVISIIIVLVVSLF. Topologically, residues 548–642 are cytoplasmic; that stretch reads TKPIPDVHLY…TSEKPLWRTV (95 aa). Phosphothreonine is present on threonine 587. A helical membrane pass occupies residues 643-660; the sequence is VNINGIILLTVAVFCHAY. At 661–662 the chain is on the extracellular side; it reads FA.

The protein belongs to the sodium:solute symporter (SSF) (TC 2.A.21) family. Post-translationally, N-glycosylation is not necessary for the cotransporter function.

The protein localises to the apical cell membrane. It catalyses the reaction D-glucose(out) + 2 Na(+)(out) = D-glucose(in) + 2 Na(+)(in). The catalysed reaction is D-galactose(out) + 2 Na(+)(out) = D-galactose(in) + 2 Na(+)(in). Its activity is regulated as follows. Enhanced by the interaction with PDZK1IP1/MAP17; but unlike SLC5A2/SGLT2, PDZK1IP1 is not essential for SLC5A1 transporter activity. Possibly modulated by cholesterol binding. Functionally, electrogenic Na(+)-coupled sugar symporter that actively transports D-glucose or D-galactose at the plasma membrane, with a Na(+) to sugar coupling ratio of 2:1. Transporter activity is driven by a transmembrane Na(+) electrochemical gradient set by the Na(+)/K(+) pump. Has a primary role in the transport of dietary monosaccharides from enterocytes to blood. Responsible for the absorption of D-glucose or D-galactose across the apical brush-border membrane of enterocytes, whereas basolateral exit is provided by GLUT2. Additionally, functions as a D-glucose sensor in enteroendocrine cells, triggering the secretion of the incretins GCG and GIP that control food intake and energy homeostasis. Together with SGLT2, functions in reabsorption of D-glucose from glomerular filtrate, playing a nonredundant role in the S3 segment of the proximal tubules. Transports D-glucose into endometrial epithelial cells, controlling glycogen synthesis and nutritional support for the embryo as well as the decidual transformation of endometrium prior to conception. Acts as a water channel enabling passive water transport in response to the osmotic gradient created upon sugar and Na(+) uptake. Has high water conductivity comparable to aquaporins and therefore is expected to play an important role in transepithelial water permeability, especially in the small intestine. The protein is Sodium/glucose cotransporter 1 (SLC5A1) of Sus scrofa (Pig).